Consider the following 551-residue polypeptide: Cytochrome P450 monooxygenase sdnQ (551 aa).

The tract at residues 1 to 23 (MDDPSIASGFQQGTGRTTGANGT) is disordered. A compositionally biased stretch (polar residues) spans 8–23 (SGFQQGTGRTTGANGT). N-linked (GlcNAc...) asparagine glycosylation occurs at Asn-21. Residues 41–57 (CIGTSLLVALLTTIIIY) form a helical membrane-spanning segment. Heme is bound at residue Cys-491.

It belongs to the cytochrome P450 family. It depends on heme as a cofactor.

It is found in the membrane. Its pathway is antibiotic biosynthesis. Functionally, cytochrome P450 monooxygenase; part of the gene cluster that mediates the biosynthesis of sordarin and hypoxysordarin, glycoside antibiotics with a unique tetracyclic diterpene aglycone structure. First, the geranylgeranyl diphosphate synthase sdnC constructs GGDP from farnesyl diphosphate and isopentenyl diphosphate. The diterpene cyclase sdnA then catalyzes the cyclization of GGDP to afford cycloaraneosene. Cycloaraneosene is then hydroxylated four times by the putative cytochrome P450 monooxygenases sdnB, sdnE, sdnF and sdnH to give a hydroxylated cycloaraneosene derivative such as cycloaraneosene-8,9,13,19-tetraol. Although the order of the hydroxylations is unclear, at least C8, C9 and C13 of the cycloaraneosene skeleton are hydroxylated before the sordaricin formation. Dehydration of the 13-hydroxy group of the hydroxylated cycloaraneosene derivative might be catalyzed by an unassigned hypothetical protein such as sdnG and sdnP to construct the cyclopentadiene moiety. The FAD-dependent oxidoreductase sdnN is proposed to catalyze the oxidation at C9 of the hydroxylated cycloaraneosene derivative and also catalyze the Baeyer-Villiger oxidation to give the lactone intermediate. The presumed lactone intermediate would be hydrolyzed to give an acrolein moiety and a carboxylate moiety. Then, [4+2]cycloaddition would occur between the acrolein moiety and the cyclopentadiene moiety to give sordaricin. SdnN might also be involved in the [4+2]cycloaddition after the hypothesized oxidation to accommodate the oxidized product and prompt the [4+2]cycloaddition. GDP-6-deoxy-D-altrose may be biosynthesized from GDP-D-mannose by the putative GDP-mannose-4,6-dehydratase sdnI and the short-chain dehydrogenase sdnK. The glycosyltransferase sdnJ catalyzes the attachment of 6-deoxy-D-altrose onto the 19-hydroxy group of sordaricin to give 4'-O-demethylsordarin. The methyltransferase sdnD would complete the biosynthesis of sordarin. Sordarin can be further modified into hypoxysordarin. The unique acyl chain at the 3'-hydroxy group of hypoxysordarin would be constructed by an iterative type I PKS sdnO and the trans-acting polyketide methyltransferase sdnL. SdnL would be responsible for the introduction of an alpha-methyl group of the polyketide chain. Alternatively, the beta-lactamase-like protein sdnR might be responsible for the cleavage and transfer of the polyketide chain from the PKS sdnO to sordarin. Two putative cytochrome P450 monooxygenases, sdnQ and sdnT, might catalyze the epoxidations of the polyketide chain to complete the biosynthesis of hypoxysordarin. Transcriptional regulators sdnM and sdnS are presumably encoded for the transcriptional regulation of the expression of the sdn gene cluster. The polypeptide is Cytochrome P450 monooxygenase sdnQ (Sordaria araneosa (Pleurage araneosa)).